A 249-amino-acid polypeptide reads, in one-letter code: Proteasome subunit alpha 2 (249 aa).

Met-1 bears the N-acetylmethionine mark.

Belongs to the peptidase T1A family. The 20S proteasome core is composed of 14 alpha and 14 beta subunits that assemble into four stacked heptameric rings, resulting in a barrel-shaped structure. The two inner rings, each composed of seven catalytic beta subunits, are sandwiched by two outer rings, each composed of seven alpha subunits. H.volcanii produces at least 2 types of 20S proteasomes: an alpha1-beta proteasome and a proteasome containing all three subunits (alpha1, alpha2, and beta) that appears to be asymmetrical with homo-oligomeric alpha1 and alpha2 rings positioned on separate ends. The catalytic chamber with the active sites is on the inside of the barrel. Has probably a gated structure, the ends of the cylinder being occluded by the N-termini of the alpha-subunits. Is likely capped at one or both ends by the proteasome regulatory ATPase, PAN.

It is found in the cytoplasm. Its activity is regulated as follows. The formation of the proteasomal ATPase PAN-20S proteasome complex, via the docking of the C-termini of PAN into the intersubunit pockets in the alpha-rings, triggers opening of the gate for substrate entry. Interconversion between the open-gate and close-gate conformations leads to a dynamic regulation of the 20S proteasome proteolysis activity. In terms of biological role, component of the proteasome core, a large protease complex with broad specificity involved in protein degradation. The H.volcanii alpha1-beta-alpha2 proteasome is able to cleave oligopeptides after Tyr and thus displays chymotrypsin-like activity. The protein is Proteasome subunit alpha 2 of Haloferax volcanii (strain ATCC 29605 / DSM 3757 / JCM 8879 / NBRC 14742 / NCIMB 2012 / VKM B-1768 / DS2) (Halobacterium volcanii).